Reading from the N-terminus, the 395-residue chain is Digeranylgeranylglycerophospholipid reductase (395 aa).

The FAD site is built by Ala15, Asp34, Cys45, Ala46, Ala48, Arg97, Ala121, Asp276, and Gly288. Arg329 serves as a coordination point for a 2,3-bis-O-(geranylgeranyl)-sn-glycerol 1-phospholipid.

It belongs to the geranylgeranyl reductase family. DGGGPL reductase subfamily. Requires FAD as cofactor.

The catalysed reaction is a 2,3-bis-O-phytanyl-sn-glycerol 1-phospholipid + 8 A = a 2,3-bis-O-(geranylgeranyl)-sn-glycerol 1-phospholipid + 8 AH2. The enzyme catalyses 2,3-bis-O-(phytanyl)-sn-glycerol 1-phosphate + 8 A = 2,3-bis-O-(geranylgeranyl)-sn-glycerol 1-phosphate + 8 AH2. It catalyses the reaction CDP-2,3-bis-O-(geranylgeranyl)-sn-glycerol + 8 AH2 = CDP-2,3-bis-O-(phytanyl)-sn-glycerol + 8 A. It carries out the reaction archaetidylserine + 8 AH2 = 2,3-bis-O-phytanyl-sn-glycero-3-phospho-L-serine + 8 A. It participates in membrane lipid metabolism; glycerophospholipid metabolism. In terms of biological role, is involved in the reduction of 2,3-digeranylgeranylglycerophospholipids (unsaturated archaeols) into 2,3-diphytanylglycerophospholipids (saturated archaeols) in the biosynthesis of archaeal membrane lipids. Catalyzes the formation of archaetidic acid (2,3-di-O-phytanyl-sn-glyceryl phosphate) from 2,3-di-O-geranylgeranylglyceryl phosphate (DGGGP) via the hydrogenation of each double bond of the isoprenoid chains. Is also probably able to reduce double bonds of geranyl groups in CDP-2,3-bis-O-(geranylgeranyl)-sn-glycerol and archaetidylserine, thus acting at various stages in the biosynthesis of archaeal membrane lipids. This is Digeranylgeranylglycerophospholipid reductase from Thermococcus kodakarensis (strain ATCC BAA-918 / JCM 12380 / KOD1) (Pyrococcus kodakaraensis (strain KOD1)).